Reading from the N-terminus, the 131-residue chain is Phosphomevalonate dehydratase small subunit (131 aa).

Residue Ser-62 is the Proton acceptor of the active site.

Belongs to the AcnX type II small subunit family. Heterodimer composed of a large subunit (PMDh-L) and a small subunit (PMDh-S).

The enzyme catalyses (R)-5-phosphomevalonate = (2E)-3-methyl-5-phosphooxypent-2-enoate + H2O. The protein operates within isoprenoid biosynthesis; isopentenyl diphosphate biosynthesis via mevalonate pathway. Component of a hydro-lyase that catalyzes the dehydration of mevalonate 5-phosphate (MVA5P) to form trans-anhydromevalonate 5-phosphate (tAHMP). Involved in the archaeal mevalonate (MVA) pathway, which provides fundamental precursors for isoprenoid biosynthesis, such as isopentenyl diphosphate (IPP) and dimethylallyl diphosphate (DMAPP). The chain is Phosphomevalonate dehydratase small subunit from Methanothermobacter thermautotrophicus (strain ATCC 29096 / DSM 1053 / JCM 10044 / NBRC 100330 / Delta H) (Methanobacterium thermoautotrophicum).